Consider the following 197-residue polypeptide: uncharacterized protein (197 aa).

One can recognise a PfpI endopeptidase domain in the interval 29–166 (DWSVHTVSLD…FTNLILEMID (138 aa)). C98 serves as the catalytic Nucleophile.

Belongs to the peptidase C56 family.

This is an uncharacterized protein from Bacillus subtilis (strain 168).